The following is an 89-amino-acid chain: Small ribosomal subunit protein uS14A (89 aa).

This sequence belongs to the universal ribosomal protein uS14 family. Part of the 30S ribosomal subunit. Contacts proteins S3 and S10.

Its function is as follows. Binds 16S rRNA, required for the assembly of 30S particles and may also be responsible for determining the conformation of the 16S rRNA at the A site. In Bacillus licheniformis (strain ATCC 14580 / DSM 13 / JCM 2505 / CCUG 7422 / NBRC 12200 / NCIMB 9375 / NCTC 10341 / NRRL NRS-1264 / Gibson 46), this protein is Small ribosomal subunit protein uS14A.